Here is a 482-residue protein sequence, read N- to C-terminus: MVGSVGNGLVDLGGAAVAVNGVGKGMRPEAVAVAMEVESPPRPAEEEGEGSPTRREIVLGRNVHTASFAVKEPDADDEETGEREAAMASVLALYRRNLVERTKHHLGYPYNLDFDYGALGQLQHFSINNLGDPFIESNYGVHSRQFEVGVLDWFARIWELEKNEYWGYITNCGTEGNLHGILVGREVFPDGILYASRESHYSVFKAARMYRMDCVKVDTLISGEIDCEDFQRKLLLNRDKPAIINVNIGTTVKGAVDDLDLVIKTLEEGGFKDRFYIHCDGALFGLMIPFVKKAPKVSFKKPIGSVSVSGHKFVGCPMPCGVQITRLEHINRLSSNVEYLASRDATIMGSRNGHAPIFLWYTLNRKGYRGFQKEVQKCLRNAHYLKDRLKEAGIGAMLNELSSTVVFERPKDEEFVRRWQLACEGNIAHVVVMPSVTIDKLDYFLNELTEKRATWYQDGSCQPPCLAKDVGEENCLCSIHKK.

Residues glutamate 36–arginine 55 are disordered. Position 200 (histidine 200) interacts with substrate. N6-(pyridoxal phosphate)lysine is present on lysine 312.

The protein belongs to the group II decarboxylase family. Pyridoxal 5'-phosphate is required as a cofactor.

The enzyme catalyses L-serine + H(+) = ethanolamine + CO2. Functionally, catalyzes the biosynthesis of ethanolamine from serine. Decarboxylation of free serine is the major source of ethanolamine production in plants and ethanolamine metabolism is crucial for the synthesis of choline, phosphatidylethanolamine (PE) and phosphatidylcholine (PC), and thus for plant growth. The sequence is that of Serine decarboxylase 1 (SDC1) from Oryza sativa subsp. japonica (Rice).